The chain runs to 219 residues: UPF0502 protein GSU0233 (219 aa).

The protein belongs to the UPF0502 family.

The polypeptide is UPF0502 protein GSU0233 (Geobacter sulfurreducens (strain ATCC 51573 / DSM 12127 / PCA)).